A 314-amino-acid chain; its full sequence is Torsin-2A (314 aa).

An N-terminal signal peptide occupies residues 1-19 (MAVRWWIIPMLLLVPGSSG). 86 to 93 (GWSGTGKT) provides a ligand contact to ATP. 2 N-linked (GlcNAc...) asparagine glycosylation sites follow: N142 and N283.

This sequence belongs to the ClpA/ClpB family. Torsin subfamily. As to quaternary structure, homohexamer.

The protein localises to the endoplasmic reticulum lumen. The protein is Torsin-2A (tor2a) of Xenopus laevis (African clawed frog).